The primary structure comprises 125 residues: uncharacterized protein (125 aa).

The 99-residue stretch at 14-112 (CPVEFTLDVI…WGESNRDVLE (99 aa)) folds into the HTH hxlR-type domain.

This is an uncharacterized protein from Bacillus subtilis (strain 168).